The primary structure comprises 609 residues: Alpha-glycerophosphate oxidase (609 aa).

21–49 (DLLVIGGGITGAGLTLQAAAAGMKVAVLE) lines the FAD pocket.

Belongs to the FAD-dependent glycerol-3-phosphate dehydrogenase family. It depends on FAD as a cofactor.

The protein resides in the cytoplasm. The enzyme catalyses sn-glycerol 3-phosphate + O2 = dihydroxyacetone phosphate + H2O2. The sequence is that of Alpha-glycerophosphate oxidase (glpO) from Lactococcus lactis subsp. lactis (strain IL1403) (Streptococcus lactis).